A 117-amino-acid polypeptide reads, in one-letter code: Iron-sulfur cluster insertion protein ErpA (117 aa).

Iron-sulfur cluster contacts are provided by Cys-45, Cys-109, and Cys-111.

It belongs to the HesB/IscA family. In terms of assembly, homodimer. The cofactor is iron-sulfur cluster.

In terms of biological role, required for insertion of 4Fe-4S clusters for at least IspG. The sequence is that of Iron-sulfur cluster insertion protein ErpA from Hahella chejuensis (strain KCTC 2396).